The sequence spans 463 residues: ATP synthase subunit beta (463 aa).

ATP is bound at residue 152–159 (GGAGVGKT).

It belongs to the ATPase alpha/beta chains family. F-type ATPases have 2 components, CF(1) - the catalytic core - and CF(0) - the membrane proton channel. CF(1) has five subunits: alpha(3), beta(3), gamma(1), delta(1), epsilon(1). CF(0) has three main subunits: a(1), b(2) and c(9-12). The alpha and beta chains form an alternating ring which encloses part of the gamma chain. CF(1) is attached to CF(0) by a central stalk formed by the gamma and epsilon chains, while a peripheral stalk is formed by the delta and b chains.

Its subcellular location is the cell inner membrane. The enzyme catalyses ATP + H2O + 4 H(+)(in) = ADP + phosphate + 5 H(+)(out). Produces ATP from ADP in the presence of a proton gradient across the membrane. The catalytic sites are hosted primarily by the beta subunits. The polypeptide is ATP synthase subunit beta (Shewanella denitrificans (strain OS217 / ATCC BAA-1090 / DSM 15013)).